Consider the following 461-residue polypeptide: tRNA modification GTPase MnmE (461 aa).

3 residues coordinate (6S)-5-formyl-5,6,7,8-tetrahydrofolate: Lys32, Glu89, and Lys128. Residues 224–387 form the TrmE-type G domain; it reads GHALSIVGKP…LSQKISAFFP (164 aa). Asn234 contributes to the K(+) binding site. Residues 234–239, 253–259, and 278–281 contribute to the GTP site; these read NAGKSS, SDIKGTT, and DTAG. Ser238 lines the Mg(2+) pocket. The K(+) site is built by Ser253, Ile255, and Thr258. Thr259 contributes to the Mg(2+) binding site. Lys461 is a (6S)-5-formyl-5,6,7,8-tetrahydrofolate binding site.

It belongs to the TRAFAC class TrmE-Era-EngA-EngB-Septin-like GTPase superfamily. TrmE GTPase family. In terms of assembly, homodimer. Heterotetramer of two MnmE and two MnmG subunits. K(+) serves as cofactor.

It localises to the cytoplasm. Functionally, exhibits a very high intrinsic GTPase hydrolysis rate. Involved in the addition of a carboxymethylaminomethyl (cmnm) group at the wobble position (U34) of certain tRNAs, forming tRNA-cmnm(5)s(2)U34. The protein is tRNA modification GTPase MnmE of Helicobacter pylori (strain ATCC 700392 / 26695) (Campylobacter pylori).